We begin with the raw amino-acid sequence, 729 residues long: Triadin (729 aa).

The tract at residues 1–28 is disordered; that stretch reads MTEITAEGNASTTTTVIDSKNGSVPKSP. At 1 to 47 the chain is on the cytoplasmic side; sequence MTEITAEGNASTTTTVIDSKNGSVPKSPGKVLKRTVTEDIVTTFSSP. The segment covering 8–24 has biased composition (polar residues); the sequence is GNASTTTTVIDSKNGSV. Residues 48–68 traverse the membrane as a helical segment; the sequence is AAWLLVIALIITWSAVAIVMF. The Lumenal segment spans residues 69–729; the sequence is DLVDYKNFSA…NSPGQKQQGQ (661 aa). Asparagine 75 carries N-linked (GlcNAc...) asparagine glycosylation. The segment covering 117-129 has biased composition (acidic residues); the sequence is EDEEDDDGDEDTD. Disordered stretches follow at residues 117–265, 281–682, and 705–729; these read EDEE…EQKD, DLKP…PTKQ, and PFTP…QQGQ. 8 stretches are compositionally biased toward basic and acidic residues: residues 130–265, 309–357, 371–433, 444–509, 516–531, 538–562, 580–598, and 609–674; these read KGEI…EQKD, LEEK…KASE, AKKD…KEEI, GKKE…EVKP, GKKE…KEAK, VQIH…EKVL, KKAE…DKPK, and ESGK…KEGT. Residue asparagine 647 is glycosylated (N-linked (GlcNAc...) asparagine). Residues 715-729 are compositionally biased toward polar residues; the sequence is SSGQANSPGQKQQGQ.

In terms of assembly, homooligomer of variable subunit number; disulfide-linked. Interacts with CASQ1 and RYR1 in skeletal muscle. Interacts with CASQ2. In terms of processing, phosphorylated by CaMK2. N-glycosylated.

The protein resides in the cell membrane. The protein localises to the sarcoplasmic reticulum membrane. In terms of biological role, contributes to the regulation of lumenal Ca2+ release via the sarcoplasmic reticulum calcium release channels RYR1 and RYR2, a key step in triggering skeletal and heart muscle contraction. Required for normal organization of the triad junction, where T-tubules and the sarcoplasmic reticulum terminal cisternae are in close contact. Required for normal skeletal muscle strength. Plays a role in excitation-contraction coupling in the heart and in regulating the rate of heart beats. This chain is Triadin (TRDN), found in Homo sapiens (Human).